Reading from the N-terminus, the 321-residue chain is Tyrosine recombinase XerC (321 aa).

In terms of domain architecture, Core-binding (CB) spans 16 to 107; it reads PSIAQEMTRW…GLRSFGRFLE (92 aa). The Tyr recombinase domain occupies 128 to 315; sequence SLPKPLPMAS…DSERLLEVYA (188 aa). Residues arginine 173, lysine 199, histidine 267, arginine 270, and histidine 293 contribute to the active site. Tyrosine 302 (O-(3'-phospho-DNA)-tyrosine intermediate) is an active-site residue.

It belongs to the 'phage' integrase family. XerC subfamily. Forms a cyclic heterotetrameric complex composed of two molecules of XerC and two molecules of XerD.

The protein resides in the cytoplasm. Its function is as follows. Site-specific tyrosine recombinase, which acts by catalyzing the cutting and rejoining of the recombining DNA molecules. The XerC-XerD complex is essential to convert dimers of the bacterial chromosome into monomers to permit their segregation at cell division. It also contributes to the segregational stability of plasmids. The polypeptide is Tyrosine recombinase XerC (Bradyrhizobium diazoefficiens (strain JCM 10833 / BCRC 13528 / IAM 13628 / NBRC 14792 / USDA 110)).